The primary structure comprises 428 residues: Immunoglobulin superfamily member 11 (428 aa).

The first 22 residues, 1–22 (MTRRRSAPASWLLVSLLGVATS), serve as a signal peptide directing secretion. The Ig-like V-type domain occupies 23 to 136 (LEVSESPGSV…DRGGRNIGVT (114 aa)). Residues 23-240 (LEVSESPGSV…QVISPQPRSV (218 aa)) are Extracellular-facing. 2 cysteine pairs are disulfide-bonded: Cys-44/Cys-120 and Cys-165/Cys-215. The N-linked (GlcNAc...) asparagine glycan is linked to Asn-102. In terms of domain architecture, Ig-like C2-type spans 144-234 (PSAPQCQIQG…TCLLDLQVIS (91 aa)). The chain crosses the membrane as a helical span at residues 241-261 (GVIAGAVGTGAVLIVICLALI). Over 262–428 (SGAFFYWRSK…PAQSRAGSLV (167 aa)) the chain is Cytoplasmic. Arg-375 is modified (omega-N-methylarginine). Positions 376-389 (GSSPQVLPRNNGSV) are enriched in polar residues. The disordered stretch occupies residues 376 to 396 (GSSPQVLPRNNGSVSRKPWPQ).

Post-translationally, N-glycosylated. Highly expressed in testis and detected in kidney and adrenal gland. In brain, expressed in commissure fibers of the corpus callosum and pyramidal cell layers of the dentate gyrus and hippocampus where it is probably expressed by both neurons and glial cells.

It localises to the cell membrane. Functionally, functions as a cell adhesion molecule through homophilic interaction. Stimulates cell growth. In Mus musculus (Mouse), this protein is Immunoglobulin superfamily member 11 (Igsf11).